The chain runs to 280 residues: Golgi to ER traffic protein 2 (280 aa).

Basic and acidic residues-rich tracts occupy residues methionine 1 to glutamine 17, serine 44 to lysine 62, and alanine 71 to lysine 80. The interval methionine 1–lysine 80 is disordered. Residues methionine 1–threonine 146 are Cytoplasmic-facing. A helical transmembrane segment spans residues leucine 147–leucine 166. Residues threonine 167–serine 191 are Lumenal-facing. The chain crosses the membrane as a helical span at residues phenylalanine 192–serine 211. The Cytoplasmic segment spans residues valine 212–asparagine 258. A helical membrane pass occupies residues isoleucine 259–glutamine 279. Residue isoleucine 280 is a topological domain, lumenal.

Belongs to the GET2 family. As to quaternary structure, component of the Golgi to ER traffic (GET) complex, which is composed of GET1, GET2 and GET3. Within the complex, GET1 and GET2 form a heterotetramer which is stabilized by phosphatidylinositol binding and which binds to the GET3 homodimer.

Its subcellular location is the endoplasmic reticulum membrane. The protein localises to the golgi apparatus membrane. Required for the post-translational delivery of tail-anchored (TA) proteins to the endoplasmic reticulum. Together with GET1, acts as a membrane receptor for soluble GET3, which recognizes and selectively binds the transmembrane domain of TA proteins in the cytosol. The GET complex cooperates with the HDEL receptor ERD2 to mediate the ATP-dependent retrieval of resident ER proteins that contain a C-terminal H-D-E-L retention signal from the Golgi to the ER. This is Golgi to ER traffic protein 2 from Candida glabrata (strain ATCC 2001 / BCRC 20586 / JCM 3761 / NBRC 0622 / NRRL Y-65 / CBS 138) (Yeast).